We begin with the raw amino-acid sequence, 423 residues long: Serine--tRNA ligase (423 aa).

229–231 serves as a coordination point for L-serine; the sequence is TAE. 260–262 provides a ligand contact to ATP; sequence RKE. Residue glutamate 283 participates in L-serine binding. Residue 347-350 coordinates ATP; the sequence is EISS. An L-serine-binding site is contributed by serine 383.

This sequence belongs to the class-II aminoacyl-tRNA synthetase family. Type-1 seryl-tRNA synthetase subfamily. Homodimer. The tRNA molecule binds across the dimer.

Its subcellular location is the cytoplasm. The enzyme catalyses tRNA(Ser) + L-serine + ATP = L-seryl-tRNA(Ser) + AMP + diphosphate + H(+). It carries out the reaction tRNA(Sec) + L-serine + ATP = L-seryl-tRNA(Sec) + AMP + diphosphate + H(+). The protein operates within aminoacyl-tRNA biosynthesis; selenocysteinyl-tRNA(Sec) biosynthesis; L-seryl-tRNA(Sec) from L-serine and tRNA(Sec): step 1/1. Catalyzes the attachment of serine to tRNA(Ser). Is also able to aminoacylate tRNA(Sec) with serine, to form the misacylated tRNA L-seryl-tRNA(Sec), which will be further converted into selenocysteinyl-tRNA(Sec). The sequence is that of Serine--tRNA ligase from Syntrophotalea carbinolica (strain DSM 2380 / NBRC 103641 / GraBd1) (Pelobacter carbinolicus).